A 165-amino-acid polypeptide reads, in one-letter code: Cyclic pyranopterin monophosphate synthase (165 aa).

Substrate-binding positions include 83 to 85 (FCH) and 120 to 121 (ME). Residue D135 is part of the active site.

The protein belongs to the MoaC family. Homohexamer; trimer of dimers.

It catalyses the reaction (8S)-3',8-cyclo-7,8-dihydroguanosine 5'-triphosphate = cyclic pyranopterin phosphate + diphosphate. Its pathway is cofactor biosynthesis; molybdopterin biosynthesis. Catalyzes the conversion of (8S)-3',8-cyclo-7,8-dihydroguanosine 5'-triphosphate to cyclic pyranopterin monophosphate (cPMP). The polypeptide is Cyclic pyranopterin monophosphate synthase (Xanthomonas oryzae pv. oryzae (strain MAFF 311018)).